The following is a 263-amino-acid chain: MALKHYKNSDSTVFNDAKALFDLNKNILLKGPTGSGKTKLAETLSEVVDTPMHQVNCSVDLDTESLLGFKTIKTNAEGQQEIVFVDGPVIKAMKEGHILYIDEINMAKPETLPVLNGVLDYRRQITNPYTGEVIKAVPGFNVIAAINEGYVGTLPMNEALKNRFVVIHVDYIDGDILKNVIKEQSLLQGDKQIEQIIKFNEDLRTMSKQGQISEEAASIRALLDLCDLITVMPVERAIKRTIIDKLEDEREQQAIYNAVELNF.

31 to 38 lines the ATP pocket; it reads GPTGSGKT.

It belongs to the CbbQ/NirQ/NorQ/GpvN family.

This is an uncharacterized protein from Staphylococcus aureus (strain USA300).